The primary structure comprises 85 residues: Dynein light chain 1, cytoplasmic (85 aa).

This sequence belongs to the dynein light chain family. In terms of assembly, homodimer. Cytoplasmic dynein consists of two catalytic heavy chains (HCs) and a number of non-catalytic subunits which present intermediate chains (ICs), light intermediate chains (LICs) and light chains (LCs). Component of the nuclear pore complex (NPC). NPC constitutes the exclusive means of nucleocytoplasmic transport. NPCs allow the passive diffusion of ions and small molecules and the active, nuclear transport receptor-mediated bidirectional transport of macromolecules such as proteins, RNAs, ribonucleoparticles (RNPs), and ribosomal subunits across the nuclear envelope. Due to its 8-fold rotational symmetry, all subunits are present with 8 copies or multiples thereof.

It is found in the cytoplasm. The protein resides in the cytoskeleton. The protein localises to the nucleus. Its subcellular location is the nuclear pore complex. Its function is as follows. Acts as one of several non-catalytic accessory components of the cytoplasmic dynein complex that are thought to be involved in linking dynein to cargos and to adapter proteins that regulate dynein function. Cytoplasmic dynein 1 acts as a motor for the intracellular retrograde motility of vesicles and organelles along microtubules. May play a role in changing or maintaining the spatial distribution of cytoskeletal structures. Also a component of the nuclear pore complex. The polypeptide is Dynein light chain 1, cytoplasmic (dlc2) (Schizosaccharomyces pombe (strain 972 / ATCC 24843) (Fission yeast)).